Here is a 423-residue protein sequence, read N- to C-terminus: CinA-like protein (423 aa).

Belongs to the CinA family.

This Chlorobium chlorochromatii (strain CaD3) protein is CinA-like protein.